Reading from the N-terminus, the 269-residue chain is 5'-nucleotidase SurE (269 aa).

A divalent metal cation-binding residues include Asp11, Asp12, Ser42, and Asn90.

The protein belongs to the SurE nucleotidase family. It depends on a divalent metal cation as a cofactor.

The protein resides in the cytoplasm. It catalyses the reaction a ribonucleoside 5'-phosphate + H2O = a ribonucleoside + phosphate. Its function is as follows. Nucleotidase that shows phosphatase activity on nucleoside 5'-monophosphates. This Haloarcula marismortui (strain ATCC 43049 / DSM 3752 / JCM 8966 / VKM B-1809) (Halobacterium marismortui) protein is 5'-nucleotidase SurE.